We begin with the raw amino-acid sequence, 585 residues long: Staphyloferrin A synthase (585 aa).

The protein belongs to the IucA/IucC family.

The enzyme catalyses N(5)-[(S)-citryl]-D-ornithine + citrate + ATP = staphyloferrin A + AMP + diphosphate + H(+). It participates in siderophore biosynthesis. Its function is as follows. Involved in the biosynthesis of the siderophore staphyloferrin A. Catalyzes the ATP-dependent condensation of a citryl-D-ornithine intermediate, produced by SfnaD, and citrate to form staphyloferrin A. This Staphylococcus aureus (strain NCTC 8325 / PS 47) protein is Staphyloferrin A synthase.